The primary structure comprises 74 residues: MTDRTDKAEYFIIKALENGVNVMGLTRGHDTRFHHTEKLDQGEVMIAQFTEHTSAIKVRGKALIQTSHGEITNE.

Belongs to the MtrB family. As to quaternary structure, oligomer of 11 identical subunits arranged in doughnut-like structure.

Functionally, required for transcription attenuation control in the Trp operon. This trans-acting factor seems to recognize a 10 bases nucleotide sequence in the Trp leader transcript causing transcription termination. Binds the leader RNA only in presence of L-tryptophan. In Oceanobacillus iheyensis (strain DSM 14371 / CIP 107618 / JCM 11309 / KCTC 3954 / HTE831), this protein is Transcription attenuation protein MtrB (mtrB).